A 932-amino-acid chain; its full sequence is DNA mismatch repair protein MutS (932 aa).

615-622 (GPNMAGKS) contributes to the ATP binding site.

It belongs to the DNA mismatch repair MutS family.

Its function is as follows. This protein is involved in the repair of mismatches in DNA. It is possible that it carries out the mismatch recognition step. This protein has a weak ATPase activity. The chain is DNA mismatch repair protein MutS from Clostridium botulinum (strain Kyoto / Type A2).